The sequence spans 165 residues: uncharacterized protein (165 aa).

The tract at residues 51 to 102 (KQAAVEPGARGGERPTGSQAGVTDTPDSAPFQRRSRAPRAREQAAQAGLNQK) is disordered. The span at 66–76 (TGSQAGVTDTP) shows a compositional bias: polar residues.

This is an uncharacterized protein from Mus musculus (Mouse).